A 187-amino-acid chain; its full sequence is 1,6-anhydro-N-acetylmuramyl-L-alanine amidase AmpD (187 aa).

In terms of domain architecture, N-acetylmuramoyl-L-alanine amidase spans 29–167 (SLLVVHNISL…TPDRKTDPGP (139 aa)). His-34 provides a ligand contact to Zn(2+). The active-site Proton acceptor is the Glu-116. Zn(2+)-binding residues include His-154 and Asp-164.

This sequence belongs to the N-acetylmuramoyl-L-alanine amidase 2 family. Zn(2+) serves as cofactor.

It is found in the cytoplasm. It catalyses the reaction Hydrolyzes the link between N-acetylmuramoyl residues and L-amino acid residues in certain cell-wall glycopeptides.. Its function is as follows. Involved in cell wall peptidoglycan recycling. Specifically cleaves the amide bond between the lactyl group of N-acetylmuramic acid and the alpha-amino group of the L-alanine in degradation products containing an anhydro N-acetylmuramyl moiety. In Salmonella typhimurium (strain LT2 / SGSC1412 / ATCC 700720), this protein is 1,6-anhydro-N-acetylmuramyl-L-alanine amidase AmpD (ampD).